Consider the following 154-residue polypeptide: NADPH-dependent 7-cyano-7-deazaguanine reductase (154 aa).

Cysteine 52 functions as the Thioimide intermediate in the catalytic mechanism. Catalysis depends on aspartate 59, which acts as the Proton donor. Substrate-binding positions include 74–76 (VES) and 93–94 (HE).

This sequence belongs to the GTP cyclohydrolase I family. QueF type 1 subfamily.

It localises to the cytoplasm. The catalysed reaction is 7-aminomethyl-7-carbaguanine + 2 NADP(+) = 7-cyano-7-deazaguanine + 2 NADPH + 3 H(+). It participates in tRNA modification; tRNA-queuosine biosynthesis. Catalyzes the NADPH-dependent reduction of 7-cyano-7-deazaguanine (preQ0) to 7-aminomethyl-7-deazaguanine (preQ1). This is NADPH-dependent 7-cyano-7-deazaguanine reductase from Paracoccus denitrificans (strain Pd 1222).